A 690-amino-acid chain; its full sequence is Protease 2 (690 aa).

Catalysis depends on charge relay system residues serine 534, aspartate 619, and histidine 654.

Belongs to the peptidase S9A family.

It carries out the reaction Hydrolysis of -Arg-|-Xaa- and -Lys-|-Xaa- bonds in oligopeptides, even when P1' residue is proline.. Functionally, cleaves peptide bonds on the C-terminal side of lysyl and argininyl residues. The sequence is that of Protease 2 (ptrB) from Moraxella lacunata.